Reading from the N-terminus, the 344-residue chain is Arginine N-succinyltransferase (344 aa).

Leu125 lines the succinyl-CoA pocket. His229 functions as the Proton donor in the catalytic mechanism.

The protein belongs to the arginine N-succinyltransferase family.

It carries out the reaction succinyl-CoA + L-arginine = N(2)-succinyl-L-arginine + CoA + H(+). It functions in the pathway amino-acid degradation; L-arginine degradation via AST pathway; L-glutamate and succinate from L-arginine: step 1/5. In terms of biological role, catalyzes the transfer of succinyl-CoA to arginine to produce N(2)-succinylarginine. The protein is Arginine N-succinyltransferase of Shigella dysenteriae serotype 1 (strain Sd197).